Consider the following 935-residue polypeptide: Bifunctional alpha-galactosidase/sucrose kinase AgaSK (935 aa).

The segment at 1 to 720 (MAIIYNPNKK…EAYQFAFTEL (720 aa)) is alpha-galactosidase. 3 residues coordinate Mg(2+): glutamate 176, glutamate 277, and phenylalanine 280. Residues 366-367 (DD), arginine 443, 476-480 (KWDMN), and 518-521 (CSGG) each bind substrate. The Nucleophile role is filled by aspartate 526. Aspartate 540 serves as a coordination point for substrate. Residue glutamate 606 is the Proton donor/acceptor of the active site. The segment at 721-935 (KEAGRLYEKV…VGKDGSVYEQ (215 aa)) is sucrose kinase. Residues 748-752 (GGSGS) and alanine 824 each bind ATP.

It in the N-terminal section; belongs to the glycosyl hydrolase 36 family. In the C-terminal section; belongs to the uridine kinase family. In terms of assembly, homotetramer. Requires Mg(2+) as cofactor.

It carries out the reaction Hydrolysis of terminal, non-reducing alpha-D-galactose residues in alpha-D-galactosides, including galactose oligosaccharides, galactomannans and galactolipids.. Its function is as follows. Bifunctional enzyme with alpha-galactosidase and sucrose kinase activities. Produces sucrose-6-phosphate directly from raffinose. Binds ATP. Phosphorylates sucrose specifically on the C6 position of glucose in the presence of ATP. Hydrolyzes melibiose, raffinose, stachyose and synthetic substrate p-nitrophenyl-alpha-D-galactopyranoside with high activity. Low activity against locust bean gum, guar gum and synthetic substrates xylose alpha-D-4-nitrophenol, glucose alpha-D-4-nitrophenol and o-nitrophenyl-alpha-D-galactopyranoside. This chain is Bifunctional alpha-galactosidase/sucrose kinase AgaSK, found in Mediterraneibacter gnavus (Ruminococcus gnavus).